A 364-amino-acid polypeptide reads, in one-letter code: Chorismate synthase (364 aa).

An NADP(+)-binding site is contributed by arginine 48. FMN is bound by residues arginine 131 to serine 133, asparagine 243 to alanine 244, glycine 288, lysine 303 to serine 307, and arginine 329.

Belongs to the chorismate synthase family. As to quaternary structure, homotetramer. Requires FMNH2 as cofactor.

It catalyses the reaction 5-O-(1-carboxyvinyl)-3-phosphoshikimate = chorismate + phosphate. Its pathway is metabolic intermediate biosynthesis; chorismate biosynthesis; chorismate from D-erythrose 4-phosphate and phosphoenolpyruvate: step 7/7. Catalyzes the anti-1,4-elimination of the C-3 phosphate and the C-6 proR hydrogen from 5-enolpyruvylshikimate-3-phosphate (EPSP) to yield chorismate, which is the branch point compound that serves as the starting substrate for the three terminal pathways of aromatic amino acid biosynthesis. This reaction introduces a second double bond into the aromatic ring system. In Brucella melitensis biotype 2 (strain ATCC 23457), this protein is Chorismate synthase.